Reading from the N-terminus, the 355-residue chain is Alpha-N-acetylneuraminide alpha-2,8-sialyltransferase (355 aa).

Over 1–28 (MSPCGRALHTSRGAMAMLARKFPRTRLP) the chain is Cytoplasmic. A helical; Signal-anchor for type II membrane protein membrane pass occupies residues 29 to 47 (VGASALCVVVLCWLYIFPV). The Lumenal segment spans residues 48 to 355 (YRLPNEKEIV…CEEPSPQPTS (308 aa)). N-linked (GlcNAc...) asparagine glycosylation is found at N70 and N118. Cystine bridges form between C137-C286 and C151-C346. Positions 142 and 165 each coordinate CMP-N-acetyl-beta-neuraminate. N-linked (GlcNAc...) asparagine glycans are attached at residues N213 and N244. Residues S273, T274, G275, W295, and H309 each coordinate CMP-N-acetyl-beta-neuraminate. Residue H321 is the Proton donor/acceptor of the active site.

It belongs to the glycosyltransferase 29 family.

The protein resides in the golgi apparatus membrane. It catalyses the reaction an N-acetyl-alpha-neuraminyl-(2-&gt;3)-beta-D-galactosyl derivative + CMP-N-acetyl-beta-neuraminate = an N-acetyl-alpha-neuraminyl-(2-&gt;8)-N-acetyl-alpha-neuraminyl-(2-&gt;3)-beta-D-galactosyl derivative + CMP + H(+). It carries out the reaction a ganglioside GM3 (d18:1(4E)) + CMP-N-acetyl-beta-neuraminate = a ganglioside GD3 (d18:1(4E)) + CMP + H(+). The catalysed reaction is a ganglioside GD3 (d18:1(4E)) + CMP-N-acetyl-beta-neuraminate = a ganglioside GT3 (d18:1(4E)) + CMP + H(+). The enzyme catalyses a ganglioside GD1a (d18:1(4E)) + CMP-N-acetyl-beta-neuraminate = a ganglioside GT1a (d18:1(4E)) + CMP + H(+). It catalyses the reaction a ganglioside GT1b (d18:1(4E)) + CMP-N-acetyl-beta-neuraminate = a ganglioside GQ1b (d18:1(4E)) + CMP + H(+). It carries out the reaction a ganglioside GM1b (d18:1(4E)) + CMP-N-acetyl-beta-neuraminate = a ganglioside GD1c (d18:1(4E)) + CMP + H(+). The catalysed reaction is a ganglioside GD3 + CMP-N-acetyl-beta-neuraminate = a ganglioside GT3 + CMP + H(+). The enzyme catalyses [alpha-N-acetylneuraminyl-(2-&gt;8)](n)-alpha-N-acetylneuraminyl-(2-&gt;8)-alpha-N-acetylneuraminyl-(2-&gt;3)-beta-D-galactosyl-(1-&gt;4)-beta-D-glucosyl-(1&lt;-&gt;1)-ceramide + CMP-N-acetyl-beta-neuraminate = [alpha-N-acetylneuraminyl-(2-&gt;8)](n+1)-alpha-N-acetylneuraminyl-(2-&gt;8)-alpha-N-acetylneuraminyl-(2-&gt;3)-beta-D-galactosyl-(1-&gt;4)-beta-D-glucosyl-(1&lt;-&gt;1)-ceramide + CMP + H(+). Its pathway is protein modification; protein glycosylation. The protein operates within lipid metabolism; sphingolipid metabolism. Its function is as follows. Catalyzes the addition of sialic acid in alpha 2,8-linkage to the sialic acid moiety of the ganglioside GM3 to form ganglioside GD3; gangliosides are a subfamily of complex glycosphingolipds that contain one or more residues of sialic acid. Can catalyze the addition of a second alpha-2,8- sialic acid to GD3 to form GT3. Can use GM1b, GD1a and GT1b as acceptor substrates to synthesize GD1c, GT1a and GQ1b respectively. This Mus musculus (Mouse) protein is Alpha-N-acetylneuraminide alpha-2,8-sialyltransferase.